We begin with the raw amino-acid sequence, 355 residues long: 3-dehydroquinate synthase (355 aa).

Residues 71–76, 105–109, 129–130, lysine 142, lysine 151, and 169–172 contribute to the NAD(+) site; these read EGEASK, GVVGD, TS, and TLNT. Residues glutamate 184, histidine 246, and histidine 263 each coordinate Zn(2+).

The protein belongs to the sugar phosphate cyclases superfamily. Dehydroquinate synthase family. Requires NAD(+) as cofactor. It depends on Co(2+) as a cofactor. Zn(2+) is required as a cofactor.

Its subcellular location is the cytoplasm. The catalysed reaction is 7-phospho-2-dehydro-3-deoxy-D-arabino-heptonate = 3-dehydroquinate + phosphate. It participates in metabolic intermediate biosynthesis; chorismate biosynthesis; chorismate from D-erythrose 4-phosphate and phosphoenolpyruvate: step 2/7. Functionally, catalyzes the conversion of 3-deoxy-D-arabino-heptulosonate 7-phosphate (DAHP) to dehydroquinate (DHQ). In Streptococcus mutans serotype c (strain ATCC 700610 / UA159), this protein is 3-dehydroquinate synthase.